The sequence spans 256 residues: Probable S-methyl-5'-thioinosine phosphorylase (256 aa).

Phosphate-binding positions include threonine 10 and 47–48 (RH). Methionine 178 provides a ligand contact to substrate. A phosphate-binding site is contributed by threonine 179. 202–204 (NYA) serves as a coordination point for substrate.

It belongs to the PNP/MTAP phosphorylase family. MTAP subfamily. As to quaternary structure, homotrimer.

It carries out the reaction S-methyl-5'-thioinosine + phosphate = 5-(methylsulfanyl)-alpha-D-ribose 1-phosphate + hypoxanthine. It functions in the pathway purine metabolism; purine nucleoside salvage. Its function is as follows. Catalyzes the reversible phosphorylation of S-methyl-5'-thioinosine (MTI) to hypoxanthine and 5-methylthioribose-1-phosphate. Involved in the breakdown of S-methyl-5'-thioadenosine (MTA), a major by-product of polyamine biosynthesis. Catabolism of (MTA) occurs via deamination to MTI and phosphorolysis to hypoxanthine. This is Probable S-methyl-5'-thioinosine phosphorylase from Methanopyrus kandleri (strain AV19 / DSM 6324 / JCM 9639 / NBRC 100938).